The following is a 149-amino-acid chain: Large ribosomal subunit protein bL9 (149 aa).

This sequence belongs to the bacterial ribosomal protein bL9 family.

In terms of biological role, binds to the 23S rRNA. This is Large ribosomal subunit protein bL9 from Desulforamulus reducens (strain ATCC BAA-1160 / DSM 100696 / MI-1) (Desulfotomaculum reducens).